The chain runs to 187 residues: Large ribosomal subunit protein bL12cx (187 aa).

The N-terminal 54 residues, 1-54, are a transit peptide targeting the chloroplast; the sequence is MASTTLSIATTIRSSSPLTSASTHHFLSKPTAIEFPFRLSSSSSHRAINLRPIS.

It belongs to the bacterial ribosomal protein bL12 family.

Its subcellular location is the plastid. It is found in the chloroplast. This Arabidopsis thaliana (Mouse-ear cress) protein is Large ribosomal subunit protein bL12cx (RPL12C).